The primary structure comprises 585 residues: MEKKWKYCAVYYIIQIHFVKGVWEKTVNTEENVYATLGSDVNLTCQTQTVGFFVQMQWSKVTNKIDLIAVYHPQYGFYCAYGRPCESLVTFTETPENGSKWTLHLRNMSCSVSGRYECMLVLYPEGIQTKIYNLLIQTHVTADEWNSNHTIEIEINQTLEIPCFQNSSSKISSEFTYAWSVENSSTDSWVLLSKGIKEDNGTQETLISQNHLISNSTLLKDRVKLGTDYRLHLSPVQIFDDGRKFSCHIRVGPNKILRSSTTVKVFAKPEIPVIVENNSTDVLVERRFTCLLKNVFPKANITWFIDGSFLHDEKEGIYITNEERKGKDGFLELKSVLTRVHSNKPAQSDNLTIWCMALSPVPGNKVWNISSEKITFLLGSEISSTDPPLSVTESTLDTQPSPASSVSPARYPATSSVTLVDVSALRPNTTPQPSNSSMTTRGFNYPWTSSGTDTKKSVSRIPSETYSSSPSGAGSTLHDNVFTSTARAFSEVPTTANGSTKTNHVHITGIVVNKPKDGMSWPVIVAALLFCCMILFGLGVRKWCQYQKEIMERPPPFKPPPPPIKYTCIQEPNESDLPYHEMETL.

The signal sequence occupies residues 1-21 (MEKKWKYCAVYYIIQIHFVKG). Over 22-519 (VWEKTVNTEE…IVVNKPKDGM (498 aa)) the chain is Extracellular. The 88-residue stretch at 38-125 (GSDVNLTCQT…YECMLVLYPE (88 aa)) folds into the Ig-like V-type 1 domain. N-linked (GlcNAc...) asparagine glycosylation is found at Asn-42, Asn-97, Asn-107, Asn-148, Asn-156, Asn-166, Asn-200, Asn-215, Asn-277, Asn-278, Asn-300, Asn-350, and Asn-368. An intrachain disulfide couples Cys-45 to Cys-118. Residues 156-238 (NQTLEIPCFQ…YRLHLSPVQI (83 aa)) enclose the Ig-like V-type 2 domain. Cys-163 and Cys-247 are oxidised to a cystine. The region spanning 269–375 (PEIPVIVENN…VWNISSEKIT (107 aa)) is the Ig-like C2-type domain. An intrachain disulfide couples Cys-290 to Cys-355. 3 stretches are compositionally biased toward polar residues: residues 385–418 (TDPPLSVTESTLDTQPSPASSVSPARYPATSSVT), 426–452 (RPNTTPQPSNSSMTTRGFNYPWTSSGT), and 460–475 (RIPSETYSSSPSGAGS). Residues 385–475 (TDPPLSVTES…YSSSPSGAGS (91 aa)) form a disordered region. A glycan (N-linked (GlcNAc...) asparagine) is linked at Asn-435. An N-linked (GlcNAc...) asparagine glycan is attached at Asn-497. Residues 520-540 (SWPVIVAALLFCCMILFGLGV) traverse the membrane as a helical segment. The Cytoplasmic portion of the chain corresponds to 541-585 (RKWCQYQKEIMERPPPFKPPPPPIKYTCIQEPNESDLPYHEMETL).

In terms of assembly, homodimer; disulfide-linked. Interacts with PVR. As to expression, expressed on normal T-cell lines and clones, and some transformed T-cells, but no other cultured cell lines tested. It is expressed at very low levels on activated B-cells.

The protein resides in the membrane. May be involved in adhesive interactions of activated T and NK cells during the late phase of the immune response. Promotes NK cell-target adhesion by interacting with PVR present on target cells. May function at a time after T and NK cells have penetrated the endothelium using integrins and selectins, when they are actively engaging diseased cells and moving within areas of inflammation. The polypeptide is T-cell surface protein tactile (CD96) (Homo sapiens (Human)).